The primary structure comprises 229 residues: Galactonate operon transcriptional repressor (229 aa).

The region spanning 1 to 71 (MTLNKTDRIV…RYRGAFVAPR (71 aa)) is the HTH gntR-type domain. The segment at residues 31-50 (EAELCEEFATSRNIIREVFR) is a DNA-binding region (H-T-H motif). Zn(2+) is bound by residues aspartate 146, histidine 150, and histidine 195.

Homodimer.

D-galactonate binds DgoR and induces a conformational change in the protein, which decreases its affinity for DNA and consequently derepresses transcription of the dgoRKADT operon. Involved in the regulation of D-galactonate metabolism. Represses the expression of the dgoRKADT operon by binding to two closely spaced inverted repeats in the cis-acting element, which overlap with the D-galactonate responsive dgo promoter. Employs a derepression mechanism using D-galactonate as a specific effector molecule. In Escherichia coli (strain K12), this protein is Galactonate operon transcriptional repressor.